Here is a 236-residue protein sequence, read N- to C-terminus: Transcriptional activator protein SolR (236 aa).

Residues 169–234 (VPESSAALTA…QAVVKAIAIG (66 aa)) form the HTH luxR-type domain. The segment at residues 193–212 (AYEIGQILRISERTVNFHVN) is a DNA-binding region (H-T-H motif).

The protein belongs to the autoinducer-regulated transcriptional regulatory protein family.

In Ralstonia nicotianae (strain ATCC BAA-1114 / GMI1000) (Ralstonia solanacearum), this protein is Transcriptional activator protein SolR (solR).